Reading from the N-terminus, the 131-residue chain is D-ribose pyranase (131 aa).

H20 functions as the Proton donor in the catalytic mechanism. Substrate contacts are provided by residues D28, H98, and 120–122 (YAN).

This sequence belongs to the RbsD / FucU family. RbsD subfamily. As to quaternary structure, homodecamer.

The protein resides in the cytoplasm. It catalyses the reaction beta-D-ribopyranose = beta-D-ribofuranose. It participates in carbohydrate metabolism; D-ribose degradation; D-ribose 5-phosphate from beta-D-ribopyranose: step 1/2. Functionally, catalyzes the interconversion of beta-pyran and beta-furan forms of D-ribose. In Clostridium botulinum (strain Eklund 17B / Type B), this protein is D-ribose pyranase.